The sequence spans 117 residues: EVKLLESGGGLVQPGGSLKLSCAASGFDFSGYWMSWVRQAPGKGLEWIGEINPDSSTINYTPFLKDKFIISRDNAKNTLFLQMSKVRSEDTALYFCARNWDVGFDYWGQVTTLTVSS.

The Ig-like domain occupies 1–116 (EVKLLESGGG…WGQVTTLTVS (116 aa)).

The sequence is that of Ig heavy chain V region UPC10 from Mus musculus (Mouse).